Consider the following 424-residue polypeptide: ATP-sensitive inward rectifier potassium channel 8 (424 aa).

Residues 1-69 are Cytoplasmic-facing; that stretch reads MLARKSIIPE…IFTTLVDLKW (69 aa). Residue S6 is modified to Phosphoserine. Residues 70–94 form a helical membrane-spanning segment; that stretch reads RHTLVIFTMSFLCSWLLFAIMWWLV. At 95-126 the chain is on the extracellular side; that stretch reads AFAHGDIYAYMEKGITEKSGLESAVCVTNVRS. The segment at residues 127 to 138 is an intramembrane region (helical; Pore-forming); that stretch reads FTSAFLFSIEVQ. An intramembrane region (pore-forming) is located at residues 139 to 145; that stretch reads VTIGFGG. The Selectivity filter signature appears at 140-145; that stretch reads TIGFGG. Residues 146–154 lie on the Extracellular side of the membrane; the sequence is RMMTEECPL. Residues 155–176 traverse the membrane as a helical segment; it reads AITVLILQNIVGLIINAVMLGC. The Cytoplasmic portion of the chain corresponds to 177–424; sequence IFMKTAQAHR…PEGNQCPSES (248 aa). The tract at residues 374 to 424 is disordered; that stretch reads LSHQNSLRKRNSMRRNNSMRRSNSIRRNNSSLMVPKVQFMTPEGNQCPSES. Residues 387 to 404 show a composition bias toward low complexity; the sequence is RRNNSMRRSNSIRRNNSS.

This sequence belongs to the inward rectifier-type potassium channel (TC 1.A.2.1) family. KCNJ8 subfamily. In terms of assembly, interacts with ABCC9. In terms of tissue distribution, widely expressed, including in pancreatic islets, pituitary, skeletal muscle and heart.

The protein localises to the membrane. The enzyme catalyses K(+)(in) = K(+)(out). Inward rectifier potassium channels are characterized by a greater tendency to allow potassium to flow into the cell rather than out of it. Their voltage dependence is regulated by the concentration of extracellular potassium; as external potassium is raised, the voltage range of the channel opening shifts to more positive voltages. The inward rectification is mainly due to the blockage of outward current by internal magnesium. This channel is activated by internal ATP and can be blocked by external barium. Can form a sulfonyllurea-sensitive but ATP-insensitive potassium channel with ABCC9. This Rattus norvegicus (Rat) protein is ATP-sensitive inward rectifier potassium channel 8 (Kcnj8).